The primary structure comprises 259 residues: Pimeloyl-[acyl-carrier protein] methyl ester esterase (259 aa).

Substrate is bound by residues W18, 78–79 (SL), and 139–143 (FLALD). Catalysis depends on S78, which acts as the Nucleophile. Residues D203 and H231 contribute to the active site. Substrate is bound at residue H231.

Belongs to the AB hydrolase superfamily. Carboxylesterase BioH family. Monomer.

It is found in the cytoplasm. It carries out the reaction 6-carboxyhexanoyl-[ACP] methyl ester + H2O = 6-carboxyhexanoyl-[ACP] + methanol + H(+). The protein operates within cofactor biosynthesis; biotin biosynthesis. The physiological role of BioH is to remove the methyl group introduced by BioC when the pimeloyl moiety is complete. It allows to synthesize pimeloyl-ACP via the fatty acid synthetic pathway through the hydrolysis of the ester bonds of pimeloyl-ACP esters. This chain is Pimeloyl-[acyl-carrier protein] methyl ester esterase, found in Stenotrophomonas maltophilia (strain R551-3).